The chain runs to 371 residues: MHIEQIKLTNYRNYDALALNFSPKINVFIGENAQGKTNVMESIYVLAMAKSHRTTNDKELIRWDSDYGKIEGAVQKRHGILPIELTITKKGKKGKINHIEQSRLSHYIGQMNVVMFAPEDLNVVKGSPQIRRRFIDMEIGQISPVYLHDLLTFQKVLKQRNHFLKMNQGKSMSNDVMYEVYNEQYIHAATQIIRKRFQFMDLLQEWAEPIHAGISQGKETLIIKYRTVAGIEKEHSSSEIENTLHQKLMEAREREFDRGVTLVGPHRDDLQFLVNGYDVQTYGSQGQQRTTALSLKLAEIELIKQETNETPILLLDDVLSELDDYRQSHLLNTIQGEVQTFVTTTSVEGIHHETMEQAQLFHVKQGAIEKS.

An ATP-binding site is contributed by 30-37 (GENAQGKT).

It belongs to the RecF family.

It localises to the cytoplasm. Functionally, the RecF protein is involved in DNA metabolism; it is required for DNA replication and normal SOS inducibility. RecF binds preferentially to single-stranded, linear DNA. It also seems to bind ATP. The protein is DNA replication and repair protein RecF of Lysinibacillus sphaericus (strain C3-41).